The primary structure comprises 221 residues: UPF0758 protein NTHI1125 (221 aa).

In terms of domain architecture, MPN spans 98-221; sequence PIINDLETVK…CYSFAENCLL (124 aa). Residues His170, His172, and Asp183 each contribute to the Zn(2+) site. The JAMM motif signature appears at 170–183; it reads HNHPSGITEPSYSD.

Belongs to the UPF0758 family.

This chain is UPF0758 protein NTHI1125, found in Haemophilus influenzae (strain 86-028NP).